Consider the following 188-residue polypeptide: Peptidyl-tRNA hydrolase (188 aa).

Residue F15 participates in tRNA binding. The Proton acceptor role is filled by H20. Positions 64, 66, and 112 each coordinate tRNA.

This sequence belongs to the PTH family. Monomer.

Its subcellular location is the cytoplasm. It carries out the reaction an N-acyl-L-alpha-aminoacyl-tRNA + H2O = an N-acyl-L-amino acid + a tRNA + H(+). Its function is as follows. Hydrolyzes ribosome-free peptidyl-tRNAs (with 1 or more amino acids incorporated), which drop off the ribosome during protein synthesis, or as a result of ribosome stalling. Catalyzes the release of premature peptidyl moieties from peptidyl-tRNA molecules trapped in stalled 50S ribosomal subunits, and thus maintains levels of free tRNAs and 50S ribosomes. This Borrelia recurrentis (strain A1) protein is Peptidyl-tRNA hydrolase.